The sequence spans 155 residues: Transcriptional repressor NrdR (155 aa).

A zinc finger lies at 3-34; it reads CPFCHAEETKVVDSRLVADGAQVRRRRECLEC. An ATP-cone domain is found at 49–139; the sequence is PLIIKRDGRR…VYKRFKDVSD (91 aa).

It belongs to the NrdR family. Zn(2+) serves as cofactor.

Its function is as follows. Negatively regulates transcription of bacterial ribonucleotide reductase nrd genes and operons by binding to NrdR-boxes. The chain is Transcriptional repressor NrdR from Legionella pneumophila (strain Lens).